Here is a 236-residue protein sequence, read N- to C-terminus: 2,3,4,5-tetrahydropyridine-2,6-dicarboxylate N-acetyltransferase (236 aa).

Belongs to the transferase hexapeptide repeat family. DapH subfamily.

It catalyses the reaction (S)-2,3,4,5-tetrahydrodipicolinate + acetyl-CoA + H2O = L-2-acetamido-6-oxoheptanedioate + CoA. The protein operates within amino-acid biosynthesis; L-lysine biosynthesis via DAP pathway; LL-2,6-diaminopimelate from (S)-tetrahydrodipicolinate (acetylase route): step 1/3. Functionally, catalyzes the transfer of an acetyl group from acetyl-CoA to tetrahydrodipicolinate. This is 2,3,4,5-tetrahydropyridine-2,6-dicarboxylate N-acetyltransferase from Thermotoga maritima (strain ATCC 43589 / DSM 3109 / JCM 10099 / NBRC 100826 / MSB8).